Reading from the N-terminus, the 341-residue chain is Holliday junction branch migration complex subunit RuvB (341 aa).

The large ATPase domain (RuvB-L) stretch occupies residues 3-184 (DDFDIRDARM…FGINMHLEYY (182 aa)). Residues L23, R24, G65, K68, T69, T70, 131–133 (EDY), R174, Y184, and R221 contribute to the ATP site. T69 is a Mg(2+) binding site. A small ATPAse domain (RuvB-S) region spans residues 185 to 255 (DMETLTKIVL…IACFSLEALN (71 aa)). Residues 258-341 (RYGLDQIDNK…RVGEQGFLFD (84 aa)) are head domain (RuvB-H). 2 residues coordinate DNA: R313 and R318.

This sequence belongs to the RuvB family. Homohexamer. Forms an RuvA(8)-RuvB(12)-Holliday junction (HJ) complex. HJ DNA is sandwiched between 2 RuvA tetramers; dsDNA enters through RuvA and exits via RuvB. An RuvB hexamer assembles on each DNA strand where it exits the tetramer. Each RuvB hexamer is contacted by two RuvA subunits (via domain III) on 2 adjacent RuvB subunits; this complex drives branch migration. In the full resolvosome a probable DNA-RuvA(4)-RuvB(12)-RuvC(2) complex forms which resolves the HJ.

The protein resides in the cytoplasm. It carries out the reaction ATP + H2O = ADP + phosphate + H(+). Its function is as follows. The RuvA-RuvB-RuvC complex processes Holliday junction (HJ) DNA during genetic recombination and DNA repair, while the RuvA-RuvB complex plays an important role in the rescue of blocked DNA replication forks via replication fork reversal (RFR). RuvA specifically binds to HJ cruciform DNA, conferring on it an open structure. The RuvB hexamer acts as an ATP-dependent pump, pulling dsDNA into and through the RuvAB complex. RuvB forms 2 homohexamers on either side of HJ DNA bound by 1 or 2 RuvA tetramers; 4 subunits per hexamer contact DNA at a time. Coordinated motions by a converter formed by DNA-disengaged RuvB subunits stimulates ATP hydrolysis and nucleotide exchange. Immobilization of the converter enables RuvB to convert the ATP-contained energy into a lever motion, pulling 2 nucleotides of DNA out of the RuvA tetramer per ATP hydrolyzed, thus driving DNA branch migration. The RuvB motors rotate together with the DNA substrate, which together with the progressing nucleotide cycle form the mechanistic basis for DNA recombination by continuous HJ branch migration. Branch migration allows RuvC to scan DNA until it finds its consensus sequence, where it cleaves and resolves cruciform DNA. The chain is Holliday junction branch migration complex subunit RuvB from Parabacteroides distasonis (strain ATCC 8503 / DSM 20701 / CIP 104284 / JCM 5825 / NCTC 11152).